The primary structure comprises 425 residues: Histidine--tRNA ligase (425 aa).

Belongs to the class-II aminoacyl-tRNA synthetase family. Homodimer.

Its subcellular location is the cytoplasm. It carries out the reaction tRNA(His) + L-histidine + ATP = L-histidyl-tRNA(His) + AMP + diphosphate + H(+). In Buchnera aphidicola subsp. Baizongia pistaciae (strain Bp), this protein is Histidine--tRNA ligase.